The sequence spans 290 residues: Elongation factor Ts (290 aa).

The tract at residues 83–86 (TDFV) is involved in Mg(2+) ion dislocation from EF-Tu.

This sequence belongs to the EF-Ts family.

It is found in the cytoplasm. Associates with the EF-Tu.GDP complex and induces the exchange of GDP to GTP. It remains bound to the aminoacyl-tRNA.EF-Tu.GTP complex up to the GTP hydrolysis stage on the ribosome. This chain is Elongation factor Ts (tsf), found in Aquifex aeolicus (strain VF5).